Here is a 373-residue protein sequence, read N- to C-terminus: Queuine tRNA-ribosyltransferase (373 aa).

The active-site Proton acceptor is the D93. Substrate contacts are provided by residues 93 to 97, D147, Q189, and G216; that span reads DSGGF. Positions 247–253 are RNA binding; sequence GVGAPED. D266 acts as the Nucleophile in catalysis. The RNA binding; important for wobble base 34 recognition stretch occupies residues 271–275; the sequence is TRIAR. Zn(2+) contacts are provided by C304, C306, C309, and H335.

This sequence belongs to the queuine tRNA-ribosyltransferase family. Homodimer. Within each dimer, one monomer is responsible for RNA recognition and catalysis, while the other monomer binds to the replacement base PreQ1. The cofactor is Zn(2+).

The catalysed reaction is 7-aminomethyl-7-carbaguanine + guanosine(34) in tRNA = 7-aminomethyl-7-carbaguanosine(34) in tRNA + guanine. Its pathway is tRNA modification; tRNA-queuosine biosynthesis. Its function is as follows. Catalyzes the base-exchange of a guanine (G) residue with the queuine precursor 7-aminomethyl-7-deazaguanine (PreQ1) at position 34 (anticodon wobble position) in tRNAs with GU(N) anticodons (tRNA-Asp, -Asn, -His and -Tyr). Catalysis occurs through a double-displacement mechanism. The nucleophile active site attacks the C1' of nucleotide 34 to detach the guanine base from the RNA, forming a covalent enzyme-RNA intermediate. The proton acceptor active site deprotonates the incoming PreQ1, allowing a nucleophilic attack on the C1' of the ribose to form the product. After dissociation, two additional enzymatic reactions on the tRNA convert PreQ1 to queuine (Q), resulting in the hypermodified nucleoside queuosine (7-(((4,5-cis-dihydroxy-2-cyclopenten-1-yl)amino)methyl)-7-deazaguanosine). The protein is Queuine tRNA-ribosyltransferase of Halothermothrix orenii (strain H 168 / OCM 544 / DSM 9562).